Reading from the N-terminus, the 232-residue chain is Protein FAM246A (232 aa).

Disordered stretches follow at residues 1-47 (MATP…RAPG), 153-178 (LPPP…RGPT), and 191-232 (AASR…GGGD). Residues 19 to 31 (EVLRRVTGRRRDP) are compositionally biased toward basic and acidic residues. A compositionally biased stretch (basic residues) spans 211–220 (APVRKNHKKM).

This sequence belongs to the FAM246 family.

The chain is Protein FAM246A from Homo sapiens (Human).